The sequence spans 194 residues: Oligoribonuclease (194 aa).

In terms of domain architecture, Exonuclease spans 11–174 (LIWIDLEMTG…SDVRDSIDEL (164 aa)). Tyr132 is an active-site residue.

It belongs to the oligoribonuclease family.

The protein resides in the cytoplasm. In terms of biological role, 3'-to-5' exoribonuclease specific for small oligoribonucleotides. In Xanthomonas campestris pv. campestris (strain ATCC 33913 / DSM 3586 / NCPPB 528 / LMG 568 / P 25), this protein is Oligoribonuclease.